The following is a 149-amino-acid chain: Antitoxin HigA1 (149 aa).

One can recognise an HTH cro/C1-type domain in the interval Leu-42–Val-96. The segment at residues Gln-53–Lys-72 is a DNA-binding region (H-T-H motif).

As to quaternary structure, interacts with SecB-like chaperone MT2006.

Functionally, antitoxin component of an atypical, type II toxin-antitoxin chaperone (TAC) system. Probably neutralizes the toxic effects of cognate toxin HigB1, which also requires SecB-like chaperone MT2006 (AC Q7D7P7). Autorepresses its operon (higB1-higA1-MT2006). The protein is Antitoxin HigA1 of Mycobacterium tuberculosis (strain CDC 1551 / Oshkosh).